The primary structure comprises 160 residues: Phosphopantetheine adenylyltransferase (160 aa).

Ser8 is a binding site for substrate. ATP-binding positions include 8–9 and His16; that span reads SF. The substrate site is built by Lys40, Leu73, and Lys87. ATP is bound by residues 88 to 90, Glu98, and 122 to 128; these read GLR and YGYVSST.

Belongs to the bacterial CoaD family. In terms of assembly, homohexamer. It depends on Mg(2+) as a cofactor.

The protein resides in the cytoplasm. It carries out the reaction (R)-4'-phosphopantetheine + ATP + H(+) = 3'-dephospho-CoA + diphosphate. Its pathway is cofactor biosynthesis; coenzyme A biosynthesis; CoA from (R)-pantothenate: step 4/5. Reversibly transfers an adenylyl group from ATP to 4'-phosphopantetheine, yielding dephospho-CoA (dPCoA) and pyrophosphate. The protein is Phosphopantetheine adenylyltransferase of Corynebacterium glutamicum (strain R).